The following is a 664-amino-acid chain: Delta-like protein C (664 aa).

The N-terminal stretch at 1–20 is a signal peptide; that stretch reads MARVLLTCFFILISSHLGKS. Over 21-511 the chain is Extracellular; the sequence is SGVFELKVLS…VNSPALPAAL (491 aa). One can recognise a DSL domain in the interval 154 to 198; sequence VVCDEFYHGEECSDFCRPRNDTFGHFNCDAAGNRICLPGWKGDYC. 27 disulfides stabilise this stretch: Cys156-Cys165, Cys169-Cys181, Cys189-Cys198, Cys203-Cys214, Cys207-Cys220, Cys222-Cys231, Cys234-Cys245, Cys240-Cys251, Cys253-Cys262, Cys269-Cys281, Cys275-Cys291, Cys293-Cys302, Cys309-Cys320, Cys314-Cys329, Cys331-Cys340, Cys347-Cys358, Cys352-Cys368, Cys370-Cys379, Cys386-Cys397, Cys391-Cys406, Cys408-Cys417, Cys424-Cys435, Cys429-Cys444, Cys446-Cys455, Cys462-Cys473, Cys467-Cys482, and Cys484-Cys493. Residue Asn173 is glycosylated (N-linked (GlcNAc...) asparagine). 3 consecutive EGF-like domains span residues 199 to 232, 233 to 263, and 265 to 303; these read TEPICLSGCSEENGYCEAPGECKCRIGWEGPLCD, ECTRHPGCLHGTCNQPFQCTCKEGWGGLFCN, and DLNFCTNHKPCRNDATCTNTGQGSYTCICKPGFSGKNCE. An EGF-like 4; calcium-binding domain is found at 305 to 341; it reads ETNECDSNPCKNGGSCNDQENDYTCTCPQGFYGKNCE. EGF-like domains are found at residues 343–380 and 382–418; these read SAMTCADGPCFNGGTCMEKGSGSYSCRCPPGYMGSNCE and KIDRCSSDPCANGGQCLDLGNKATCRCRPGFTGSRCE. The 37-residue stretch at 420-456 folds into the EGF-like 7; calcium-binding domain; sequence NIDDCSSNPCQNAGTCVDGINGYTCTCTLGFSGKDCR. One can recognise an EGF-like 8 domain in the interval 458 to 494; that stretch reads RSDACSFMPCQNGGTCYTHFSGPVCQCPAGFMGTQCE. Residues 512–532 traverse the membrane as a helical segment; that stretch reads IVSFTLGLITLTLVICAAIVV. Over 533–664 the chain is Cytoplasmic; sequence LRQMRQNHKA…IEQRVFATEV (132 aa).

Post-translationally, ubiquitinated by mib, leading to its endocytosis and subsequent degradation. As to expression, strongly expressed in the early retina, where it precedes other delta proteins. Also expressed in cranial ganglia, in sensory epithelia including ear and lateral line and in scattered epidermal cells. In the mesoderm, expression is visible by 50% epiboly; it is expressed subsequently in the tail bud, in stripes in the presomitic mesoderm and in the posterior half of each somite. Also expressed in notochord, blood vessels and pronephros. In contrast to other delta proteins, it is not expressed in the majority of nascent primary neurons. In somites, it marks the posterior part of each formed somite, while deltaD (dld) marks the anterior part.

Its subcellular location is the membrane. Acts as a ligand for Notch receptors and is involved in somitogenesis. Can activate Notch receptors. Required in somite segmentation to keep the oscillations of neighboring presomitic mesoderm cells synchronized. This is Delta-like protein C (dlc) from Danio rerio (Zebrafish).